We begin with the raw amino-acid sequence, 434 residues long: 23S rRNA (uracil(1939)-C(5))-methyltransferase RlmD (434 aa).

The TRAM domain occupies 10–68; the sequence is RVTTRQIITVTVNDLDPFGQGVARHQGKALFVSGVLPQEQAEVVLVEDKKQYARAQVKR. [4Fe-4S] cluster is bound by residues Cys-81, Cys-87, Cys-90, and Cys-162. Positions 265, 294, 299, 315, 342, and 363 each coordinate S-adenosyl-L-methionine. Cys-389 serves as the catalytic Nucleophile.

The protein belongs to the class I-like SAM-binding methyltransferase superfamily. RNA M5U methyltransferase family. RlmD subfamily.

The enzyme catalyses uridine(1939) in 23S rRNA + S-adenosyl-L-methionine = 5-methyluridine(1939) in 23S rRNA + S-adenosyl-L-homocysteine + H(+). Catalyzes the formation of 5-methyl-uridine at position 1939 (m5U1939) in 23S rRNA. The sequence is that of 23S rRNA (uracil(1939)-C(5))-methyltransferase RlmD from Klebsiella pneumoniae (strain 342).